The chain runs to 260 residues: Tryptophan synthase alpha chain (260 aa).

Catalysis depends on proton acceptor residues Glu52 and Asp63.

It belongs to the TrpA family. Tetramer of two alpha and two beta chains.

It catalyses the reaction (1S,2R)-1-C-(indol-3-yl)glycerol 3-phosphate + L-serine = D-glyceraldehyde 3-phosphate + L-tryptophan + H2O. It participates in amino-acid biosynthesis; L-tryptophan biosynthesis; L-tryptophan from chorismate: step 5/5. In terms of biological role, the alpha subunit is responsible for the aldol cleavage of indoleglycerol phosphate to indole and glyceraldehyde 3-phosphate. The chain is Tryptophan synthase alpha chain from Streptococcus thermophilus (strain ATCC BAA-250 / LMG 18311).